We begin with the raw amino-acid sequence, 117 residues long: Immunoglobulin heavy variable 3-30-3 (117 aa).

The signal sequence occupies residues 1–19 (MEFGLSWVFLVALLRGVQC). Gln-20 bears the Pyrrolidone carboxylic acid mark. A framework-1 region spans residues 20–44 (QVQLVESGGGVVQPGRSLRLSCAAS). The Ig-like domain maps to 20 to 117 (QVQLVESGGG…EDTAVYYCAR (98 aa)). A disulfide bridge links Cys-41 with Cys-115. The interval 45–52 (GFTFSSYA) is complementarity-determining-1. Residues 53-69 (MHWVRQAPGKGLEWVAV) form a framework-2 region. Positions 70 to 77 (ISYDGSNK) are complementarity-determining-2. Positions 78-115 (YYADSVKGRFTISRDNSKNTLYLQMNSLRAEDTAVYYC) are framework-3. The complementarity-determining-3 stretch occupies residues 116–117 (AR).

In terms of assembly, immunoglobulins are composed of two identical heavy chains and two identical light chains; disulfide-linked.

It is found in the secreted. The protein localises to the cell membrane. Its function is as follows. V region of the variable domain of immunoglobulin heavy chains that participates in the antigen recognition. Immunoglobulins, also known as antibodies, are membrane-bound or secreted glycoproteins produced by B lymphocytes. In the recognition phase of humoral immunity, the membrane-bound immunoglobulins serve as receptors which, upon binding of a specific antigen, trigger the clonal expansion and differentiation of B lymphocytes into immunoglobulins-secreting plasma cells. Secreted immunoglobulins mediate the effector phase of humoral immunity, which results in the elimination of bound antigens. The antigen binding site is formed by the variable domain of one heavy chain, together with that of its associated light chain. Thus, each immunoglobulin has two antigen binding sites with remarkable affinity for a particular antigen. The variable domains are assembled by a process called V-(D)-J rearrangement and can then be subjected to somatic hypermutations which, after exposure to antigen and selection, allow affinity maturation for a particular antigen. The sequence is that of Immunoglobulin heavy variable 3-30-3 from Homo sapiens (Human).